The following is a 68-amino-acid chain: Large ribosomal subunit protein bL31 (68 aa).

Zn(2+) contacts are provided by Cys17, Cys19, Cys37, and Cys40.

The protein belongs to the bacterial ribosomal protein bL31 family. Type A subfamily. In terms of assembly, part of the 50S ribosomal subunit. It depends on Zn(2+) as a cofactor.

Functionally, binds the 23S rRNA. The sequence is that of Large ribosomal subunit protein bL31 from Clostridium perfringens (strain ATCC 13124 / DSM 756 / JCM 1290 / NCIMB 6125 / NCTC 8237 / Type A).